Reading from the N-terminus, the 104-residue chain is Glutaredoxin 1 (104 aa).

The region spanning 1–96 (MNKSILHTII…KLLETQPKNK (96 aa)) is the Glutaredoxin domain. A disulfide bond links Cys-17 and Cys-20.

Belongs to the glutaredoxin family. In terms of assembly, monomer.

The protein resides in the cytoplasm. Has a glutathione-disulfide oxidoreductase activity in the presence of NADPH and glutathione reductase. Reduces low molecular weight disulfides and proteins. This chain is Glutaredoxin 1 (grxC1), found in Rickettsia typhi (strain ATCC VR-144 / Wilmington).